A 305-amino-acid polypeptide reads, in one-letter code: tRNA dimethylallyltransferase (305 aa).

14–21 provides a ligand contact to ATP; the sequence is GPTASGKS. Position 16 to 21 (16 to 21) interacts with substrate; sequence TASGKS. Residues 39–42 form an interaction with substrate tRNA region; it reads DSMQ.

It belongs to the IPP transferase family. As to quaternary structure, monomer. It depends on Mg(2+) as a cofactor.

It catalyses the reaction adenosine(37) in tRNA + dimethylallyl diphosphate = N(6)-dimethylallyladenosine(37) in tRNA + diphosphate. Functionally, catalyzes the transfer of a dimethylallyl group onto the adenine at position 37 in tRNAs that read codons beginning with uridine, leading to the formation of N6-(dimethylallyl)adenosine (i(6)A). This chain is tRNA dimethylallyltransferase, found in Bradyrhizobium sp. (strain BTAi1 / ATCC BAA-1182).